A 198-amino-acid chain; its full sequence is ATP-dependent Clp protease proteolytic subunit (198 aa).

Residue S101 is the Nucleophile of the active site. Residue H126 is part of the active site.

The protein belongs to the peptidase S14 family. As to quaternary structure, component of the chloroplastic Clp protease core complex.

Its subcellular location is the plastid. The protein resides in the chloroplast stroma. The enzyme catalyses Hydrolysis of proteins to small peptides in the presence of ATP and magnesium. alpha-casein is the usual test substrate. In the absence of ATP, only oligopeptides shorter than five residues are hydrolyzed (such as succinyl-Leu-Tyr-|-NHMec, and Leu-Tyr-Leu-|-Tyr-Trp, in which cleavage of the -Tyr-|-Leu- and -Tyr-|-Trp bonds also occurs).. Functionally, cleaves peptides in various proteins in a process that requires ATP hydrolysis. Has a chymotrypsin-like activity. Plays a major role in the degradation of misfolded proteins. The protein is ATP-dependent Clp protease proteolytic subunit of Psilotum nudum (Whisk fern).